Reading from the N-terminus, the 120-residue chain is SPbeta prophage-derived uncharacterized protein YosG (120 aa).

The chain is SPbeta prophage-derived uncharacterized protein YosG (yosG) from Bacillus subtilis (strain 168).